The chain runs to 165 residues: 2-C-methyl-D-erythritol 2,4-cyclodiphosphate synthase (165 aa).

A divalent metal cation contacts are provided by aspartate 9 and histidine 11. 4-CDP-2-C-methyl-D-erythritol 2-phosphate is bound by residues 9–11 (DVH) and 35–36 (HS). Histidine 43 contributes to the a divalent metal cation binding site. Residues 57–59 (DIG), 101–107 (AQAPKML), 133–136 (TTTE), phenylalanine 140, and arginine 143 contribute to the 4-CDP-2-C-methyl-D-erythritol 2-phosphate site.

This sequence belongs to the IspF family. In terms of assembly, homotrimer. A divalent metal cation is required as a cofactor.

It catalyses the reaction 4-CDP-2-C-methyl-D-erythritol 2-phosphate = 2-C-methyl-D-erythritol 2,4-cyclic diphosphate + CMP. The protein operates within isoprenoid biosynthesis; isopentenyl diphosphate biosynthesis via DXP pathway; isopentenyl diphosphate from 1-deoxy-D-xylulose 5-phosphate: step 4/6. Involved in the biosynthesis of isopentenyl diphosphate (IPP) and dimethylallyl diphosphate (DMAPP), two major building blocks of isoprenoid compounds. Catalyzes the conversion of 4-diphosphocytidyl-2-C-methyl-D-erythritol 2-phosphate (CDP-ME2P) to 2-C-methyl-D-erythritol 2,4-cyclodiphosphate (ME-CPP) with a corresponding release of cytidine 5-monophosphate (CMP). The protein is 2-C-methyl-D-erythritol 2,4-cyclodiphosphate synthase of Pseudoalteromonas translucida (strain TAC 125).